A 485-amino-acid chain; its full sequence is NADH-quinone oxidoreductase subunit N (485 aa).

14 helical membrane passes run 8–28 (LIALLPLLIVGLTVVVVMLSI), 35–55 (FLNATLSVIGLNAALVSLWFV), 71–91 (GFAMLYTGLVLLASLATCTFA), 105–125 (FYLLVLIAALGGILLANANHL), 127–147 (SLFLGIELISLPLFGLVGYAF), 159–179 (YTILSAAASSFLLFGMALVYA), 203–223 (LLAGFGLMIVGLGFKLSLVPF), 235–255 (PAPVSTFLATASKIAIFGVVM), 271–291 (VVLAIIAFASIIFGNLMALSQ), 297–317 (LLGYSSISHLGYLLVALIALQ), 326–346 (VGVYLAGYLFSSLGAFGVVSL), 373–393 (AAVMTVMMLSLAGIPMTLGFI), 408–430 (WWLVGAVVVGSAIGLYYYLRVAV), and 455–475 (IVVLISALLVLVLGIWPQPLI).

This sequence belongs to the complex I subunit 2 family. In terms of assembly, NDH-1 is composed of 13 different subunits. Subunits NuoA, H, J, K, L, M, N constitute the membrane sector of the complex.

It is found in the cell inner membrane. The catalysed reaction is a quinone + NADH + 5 H(+)(in) = a quinol + NAD(+) + 4 H(+)(out). Functionally, NDH-1 shuttles electrons from NADH, via FMN and iron-sulfur (Fe-S) centers, to quinones in the respiratory chain. The immediate electron acceptor for the enzyme in this species is believed to be ubiquinone. Couples the redox reaction to proton translocation (for every two electrons transferred, four hydrogen ions are translocated across the cytoplasmic membrane), and thus conserves the redox energy in a proton gradient. The chain is NADH-quinone oxidoreductase subunit N from Escherichia coli O7:K1 (strain IAI39 / ExPEC).